Reading from the N-terminus, the 233-residue chain is Lipoprotein-releasing system ATP-binding protein LolD (233 aa).

Residues Leu-6–Glu-233 enclose the ABC transporter domain. ATP is bound at residue Gly-42 to Ser-49.

Belongs to the ABC transporter superfamily. Lipoprotein translocase (TC 3.A.1.125) family. As to quaternary structure, the complex is composed of two ATP-binding proteins (LolD) and two transmembrane proteins (LolC and LolE).

It is found in the cell inner membrane. Its function is as follows. Part of the ABC transporter complex LolCDE involved in the translocation of mature outer membrane-directed lipoproteins, from the inner membrane to the periplasmic chaperone, LolA. Responsible for the formation of the LolA-lipoprotein complex in an ATP-dependent manner. The protein is Lipoprotein-releasing system ATP-binding protein LolD of Salmonella paratyphi A (strain ATCC 9150 / SARB42).